Consider the following 178-residue polypeptide: Large ribosomal subunit protein uL6 (178 aa).

It belongs to the universal ribosomal protein uL6 family. Part of the 50S ribosomal subunit.

In terms of biological role, this protein binds to the 23S rRNA, and is important in its secondary structure. It is located near the subunit interface in the base of the L7/L12 stalk, and near the tRNA binding site of the peptidyltransferase center. This chain is Large ribosomal subunit protein uL6, found in Thermobifida fusca (strain YX).